The sequence spans 466 residues: Argininosuccinate lyase (466 aa).

This sequence belongs to the lyase 1 family. Argininosuccinate lyase subfamily.

The protein localises to the cytoplasm. It catalyses the reaction 2-(N(omega)-L-arginino)succinate = fumarate + L-arginine. It functions in the pathway amino-acid biosynthesis; L-arginine biosynthesis; L-arginine from L-ornithine and carbamoyl phosphate: step 3/3. This Syntrophobacter fumaroxidans (strain DSM 10017 / MPOB) protein is Argininosuccinate lyase.